The following is a 201-amino-acid chain: 3-isopropylmalate dehydratase small subunit (201 aa).

Belongs to the LeuD family. LeuD type 1 subfamily. Heterodimer of LeuC and LeuD.

The enzyme catalyses (2R,3S)-3-isopropylmalate = (2S)-2-isopropylmalate. The protein operates within amino-acid biosynthesis; L-leucine biosynthesis; L-leucine from 3-methyl-2-oxobutanoate: step 2/4. Functionally, catalyzes the isomerization between 2-isopropylmalate and 3-isopropylmalate, via the formation of 2-isopropylmaleate. The polypeptide is 3-isopropylmalate dehydratase small subunit (Shewanella halifaxensis (strain HAW-EB4)).